The chain runs to 564 residues: MHYRFLRDSFVGRVTYHLSKHKYFAHPEEAKNYIIPEKYLADYKPTLADDTSINFEKEEIDNQGEPNSSQSSSSNNTIVDNNNNNNNDVDGDKIVVTWDGDDDPENPQNWPTLQKAFFIFQISFLTTSVYMGSAVYTPGIEELMHDFGIGRVVATLPLTLFVIGYGVGPLVFSPMSENAIFGRTSIYIITLFLFVILQIPTALVNNIAGLCILRFLGGFFASPCLATGGASVADVVKFWNLPVGLAAWSLGAVCGPSFGPFFGSILTVKASWRWTFWFMCIISGFSFVMLCFTLPETFGKTLLYRKAKRLRAITGNDRITSEGEIENSKMTSHELIIDTLWRPLEITVMEPVVLLINIYIAMVYSILYLFFEVFPIYFVGVKHFTLVELGTTYMSIVIGIVIAAFIYIPVIRQKFTKPILRQEQVFPEVFIPIAIVGGILLTSGLFIFGWSANRTTHWVGPLFGAATTASGAFLIFQTLFNFMGASFKPHYIASVFASNDLFRSVIASVFPLFGAPLFDNLATPEYPVAWGSSVLGFITLVMIAIPVLFYLNGPKLRARSKYAN.

The segment at 60–101 (IDNQGEPNSSQSSSSNNTIVDNNNNNNNDVDGDKIVVTWDGD) is disordered. Residues 67 to 88 (NSSQSSSSNNTIVDNNNNNNND) are compositionally biased toward low complexity. 12 helical membrane-spanning segments follow: residues 116–136 (AFFI…SAVY), 153–173 (VATL…LVFS), 184–204 (TSIY…TALV), 210–229 (LCIL…ATGG), 241–262 (LPVG…GPFF), 274–294 (WTFW…CFTL), 358–374 (IYIA…FEVF), 393–411 (YMSI…IPVI), 431–451 (IPIA…FGWS), 457–476 (HWVG…FLIF), 489–506 (PHYI…RSVI), and 530–551 (WGSS…LFYL).

Belongs to the major facilitator superfamily. CAR1 family.

The protein resides in the membrane. Probable transporter. Confers resistance to benomyl and methotrexate. The sequence is that of Benomyl/methotrexate resistance protein (MDR1) from Candida albicans (Yeast).